Consider the following 360-residue polypeptide: MKWKKSLTGLSSYKPGKREEEVMAELGLTKITKLSSNENPLGTSPKVAELQANSSVETEIYPDGWASSLRTVVADFYQLEEEELIFTAGVDELIELLTRVLLDTTKNTVMATPTFVQYRQNALIEGAEVREIPLLVDGAHDLDGMLNAIDDNTTIVWVCNPNNPTGNYIDLADIQAFLDKVPSDVLVVLDEAYIEYVTPQPEKHEKLIRTYKNLIITRTFSKIYGLASARVGYGIADKAIIEQLNIVRPPFNTTSIGQKLAIEAIKDQAFIEACRTSNANGIKQYEAFAKRFEQVKLYPANGNFVLIDLGIEAGTIFSYLEKNGYITRSGAALGFPTAVRITIGKEEENSAVIALLEKLL.

N6-(pyridoxal phosphate)lysine is present on Lys-222.

It belongs to the class-II pyridoxal-phosphate-dependent aminotransferase family. Histidinol-phosphate aminotransferase subfamily. In terms of assembly, homodimer. Requires pyridoxal 5'-phosphate as cofactor.

The enzyme catalyses L-histidinol phosphate + 2-oxoglutarate = 3-(imidazol-4-yl)-2-oxopropyl phosphate + L-glutamate. It participates in amino-acid biosynthesis; L-histidine biosynthesis; L-histidine from 5-phospho-alpha-D-ribose 1-diphosphate: step 7/9. In Listeria monocytogenes serotype 4b (strain F2365), this protein is Histidinol-phosphate aminotransferase.